The chain runs to 282 residues: Acetyl-coenzyme A carboxylase carboxyl transferase subunit beta 1 (282 aa).

The 260-residue stretch at 23 to 282 folds into the CoA carboxyltransferase N-terminal domain; that stretch reads LMTKCPECRH…MHTKGGVQHV (260 aa). 4 residues coordinate Zn(2+): Cys27, Cys30, Cys46, and Cys49. The C4-type zinc finger occupies 27–49; it reads CPECRHILLTKELEKNHKVCTKC.

It belongs to the AccD/PCCB family. In terms of assembly, acetyl-CoA carboxylase is a heterohexamer composed of biotin carboxyl carrier protein (AccB), biotin carboxylase (AccC) and two subunits each of ACCase subunit alpha (AccA) and ACCase subunit beta (AccD). Zn(2+) is required as a cofactor.

The protein resides in the cytoplasm. It carries out the reaction N(6)-carboxybiotinyl-L-lysyl-[protein] + acetyl-CoA = N(6)-biotinyl-L-lysyl-[protein] + malonyl-CoA. The protein operates within lipid metabolism; malonyl-CoA biosynthesis; malonyl-CoA from acetyl-CoA: step 1/1. Functionally, component of the acetyl coenzyme A carboxylase (ACC) complex. Biotin carboxylase (BC) catalyzes the carboxylation of biotin on its carrier protein (BCCP) and then the CO(2) group is transferred by the transcarboxylase to acetyl-CoA to form malonyl-CoA. The protein is Acetyl-coenzyme A carboxylase carboxyl transferase subunit beta 1 of Lysinibacillus sphaericus (strain C3-41).